Reading from the N-terminus, the 149-residue chain is Transcriptional repressor NrdR (149 aa).

A zinc finger spans residues 3–34 (CPFCSATDTKVIDSRLVSDGHQVRRRRQCLAC). In terms of domain architecture, ATP-cone spans 49–139 (PKVIKSNGNR…VYRSFEDIKE (91 aa)).

Belongs to the NrdR family. It depends on Zn(2+) as a cofactor.

Its function is as follows. Negatively regulates transcription of bacterial ribonucleotide reductase nrd genes and operons by binding to NrdR-boxes. This is Transcriptional repressor NrdR from Aliivibrio fischeri (strain ATCC 700601 / ES114) (Vibrio fischeri).